We begin with the raw amino-acid sequence, 154 residues long: Nuclear cap-binding protein subunit 2-A (154 aa).

Residues tyrosine 10, tyrosine 33, 102–106 (RVDWD), 113–117 (RQYGR), and 123–124 (QV) contribute to the mRNA site. One can recognise an RRM domain in the interval 30–108 (STLYVGNLSF…RLIRVDWDAG (79 aa)).

It belongs to the RRM NCBP2 family. As to quaternary structure, component of the nuclear cap-binding complex (CBC), a heterodimer composed of Cbp80 and Cbp20 that interacts with m7GpppG-capped RNA. Interacts with Ars2.

The protein localises to the nucleus. Component of the cap-binding complex (CBC), which binds co-transcriptionally to the 5' cap of pre-mRNAs and is involved in various processes such as pre-mRNA splicing and RNA-mediated gene silencing (RNAi). The CBC complex is involved in miRNA-mediated RNA interference via its interaction with Ars2 and is required for primary microRNAs (miRNAs) processing. Also involved in innate immunity via the short interfering RNAs (siRNAs) processing machinery by restricting the viral RNA production. In the CBC complex, Cbp20 recognizes and binds capped RNAs (m7GpppG-capped RNA) but requires Cbp80 to stabilize the movement of its N-terminal loop and lock the CBC into a high affinity cap-binding state with the cap structure. This Drosophila virilis (Fruit fly) protein is Nuclear cap-binding protein subunit 2-A (Cbp20-A).